The primary structure comprises 301 residues: HTH-type transcriptional regulator AbaB (301 aa).

In terms of domain architecture, HTH lysR-type spans 1–58 (MDLALLRTFVTVHRAGSFTRAAALLGLSQPAVTSQIRTLERQLGRPLFLRQARGVTPT). A DNA-binding region (H-T-H motif) is located at residues 18 to 37 (FTRAAALLGLSQPAVTSQIR).

The protein belongs to the LysR transcriptional regulatory family.

Functionally, putative regulator that may be involved in stimulating antibiotic production in S.antibioticus. In Streptomyces antibioticus, this protein is HTH-type transcriptional regulator AbaB.